We begin with the raw amino-acid sequence, 78 residues long: Large ribosomal subunit protein bL28 (78 aa).

This sequence belongs to the bacterial ribosomal protein bL28 family.

The chain is Large ribosomal subunit protein bL28 from Hydrogenovibrio crunogenus (strain DSM 25203 / XCL-2) (Thiomicrospira crunogena).